The following is a 964-amino-acid chain: Glycine dehydrogenase (decarboxylating) (964 aa).

The span at 1-11 (MNSTLQNQTKT) shows a compositional bias: polar residues. The segment at 1–21 (MNSTLQNQTKTNLEKVGTDPL) is disordered. The residue at position 713 (lysine 713) is an N6-(pyridoxal phosphate)lysine.

This sequence belongs to the GcvP family. The glycine cleavage system is composed of four proteins: P, T, L and H. Requires pyridoxal 5'-phosphate as cofactor.

It carries out the reaction N(6)-[(R)-lipoyl]-L-lysyl-[glycine-cleavage complex H protein] + glycine + H(+) = N(6)-[(R)-S(8)-aminomethyldihydrolipoyl]-L-lysyl-[glycine-cleavage complex H protein] + CO2. In terms of biological role, the glycine cleavage system catalyzes the degradation of glycine. The P protein binds the alpha-amino group of glycine through its pyridoxal phosphate cofactor; CO(2) is released and the remaining methylamine moiety is then transferred to the lipoamide cofactor of the H protein. The polypeptide is Glycine dehydrogenase (decarboxylating) (Leptospira interrogans serogroup Icterohaemorrhagiae serovar Lai (strain 56601)).